Consider the following 26-residue polypeptide: Beta-hexosaminidase (26 aa).

In terms of processing, glycosylated. As to expression, detected in dry seeds and cotyledons.

It catalyses the reaction Hydrolysis of terminal non-reducing N-acetyl-D-hexosamine residues in N-acetyl-beta-D-hexosaminides.. With respect to regulation, inhibited by AgNO(3) at a concentration of 0.1 mM. Strongly inhibited by CdCl(2), ZnCl(2) and FeCl(3) and moderately by CoCl(2), CuSO(4) and NiCl(2) at 10 mM concentration. CaCl(2), MgCl(2), MnSO(4) and KI also have a slight inhibitory effect of 20%-25% at 10 mM concentration. Activated to a small extent by MgCl(2) at 0.1 mM concentration but inhibited with increasing concentration. Not affected by carbohydrates such as fucose, galactose and glucose but displays a slight decrease in activity up to 25% with lactose, alpha-mannose and N-acetyl-galactosamine (GalNAc). Has hexosaminidase activity. Active with both p-nitrophenyl-beta-D-N-acetylglucosamine (pNP-GlcNAc) and p-nitrophenyl-beta-D-N-acetylgalactosamine (pNP-GalNAc). Not active toward p-nitrophenyl-beta-D-N,N'-diacetylchitobiose (pNP-(GlcNAc)2) or p-nitrophenyl-beta-D-N,N',N''-triacetylchitobiose (pNP-(GlcNAc)3). Removes terminal GlcNAc and may be involved in storage protein degradation. The polypeptide is Beta-hexosaminidase (Lupinus albus (White lupine)).